A 75-amino-acid polypeptide reads, in one-letter code: Gas vesicle protein S (75 aa).

Belongs to the gas vesicle GvpA family.

Its subcellular location is the gas vesicle. Probably a minor component of the gas vesicle. Gas vesicles are hollow, gas filled proteinaceous nanostructures found in some microorganisms. It is not clear what function gas vesicles perform in soil bacteria. This Streptomyces sp. (strain CB03234) protein is Gas vesicle protein S.